The chain runs to 180 residues: NADH-quinone oxidoreductase subunit I (180 aa).

2 4Fe-4S ferredoxin-type domains span residues 48–80 (IVLT…LQKA) and 90–119 (EFFR…LTPD). Residues C60, C63, C66, C70, C99, C102, C105, and C109 each contribute to the [4Fe-4S] cluster site.

This sequence belongs to the complex I 23 kDa subunit family. In terms of assembly, NDH-1 is composed of 13 different subunits. Subunits NuoA, H, J, K, L, M, N constitute the membrane sector of the complex. [4Fe-4S] cluster serves as cofactor.

It localises to the cell inner membrane. It carries out the reaction a quinone + NADH + 5 H(+)(in) = a quinol + NAD(+) + 4 H(+)(out). NDH-1 shuttles electrons from NADH, via FMN and iron-sulfur (Fe-S) centers, to quinones in the respiratory chain. The immediate electron acceptor for the enzyme in this species is believed to be ubiquinone. Couples the redox reaction to proton translocation (for every two electrons transferred, four hydrogen ions are translocated across the cytoplasmic membrane), and thus conserves the redox energy in a proton gradient. The protein is NADH-quinone oxidoreductase subunit I of Cronobacter sakazakii (strain ATCC BAA-894) (Enterobacter sakazakii).